Consider the following 338-residue polypeptide: Secretory carrier-associated membrane protein 1 (338 aa).

The disordered stretch occupies residues 1-63; it reads MSDFDSNPFA…PNVPSTQPAI (63 aa). Position 2 is an N-acetylserine (S2). Phosphoserine is present on S2. Residues 2-155 are Cytoplasmic-facing; it reads SDFDSNPFAD…QKTVKIMYYL (154 aa). T45 is subject to Phosphothreonine. A helical membrane pass occupies residues 156–176; sequence WMFHAVTLFLNIFGCLAWFCV. Topologically, residues 177–181 are lumenal; that stretch reads DPSRG. Residues 182–202 form a helical membrane-spanning segment; sequence VDFGLSILWFLLFTPCSFVCW. Residues 203-217 are Cytoplasmic-facing; that stretch reads YRPLYGAFRSDSSFR. The helical transmembrane segment at 218–238 threads the bilayer; it reads FFVFFFVYICQFAVHVLQAAG. The Lumenal segment spans residues 239-261; sequence FHNWGNCGWISSLTGLNQSIPVG. Residues 262–282 traverse the membrane as a helical segment; it reads IMMIIIAALFTASAVISLVMF. Residues 283 to 338 are Cytoplasmic-facing; that stretch reads KKVHGLYRTTGASFEKAQQEFATGVMSNKTVQTAAANAASTAATSAAQNAFKGNQI.

It belongs to the SCAMP family. In terms of assembly, interacts with SYNRG, ITSN1 and SLC9A7.

The protein localises to the golgi apparatus. The protein resides in the trans-Golgi network membrane. It is found in the recycling endosome membrane. Its function is as follows. Functions in post-Golgi recycling pathways. Acts as a recycling carrier to the cell surface. The sequence is that of Secretory carrier-associated membrane protein 1 (SCAMP1) from Sus scrofa (Pig).